Consider the following 440-residue polypeptide: Ultraviolet-B receptor UVR8 (440 aa).

N-acetylalanine is present on A2. 8 RCC1 repeats span residues 2–31, 32–84, 86–137, 139–189, 190–241, 243–293, 294–345, and 347–399; these read AEDM…VALL, SGDI…AYSQ, GMEV…AVTM, GEVQ…AVTE, DGDL…SVSY, GALY…ALTS, DGKL…AVTE, and NNVF…SGKS. A required for interaction with COP1 region spans residues 397 to 423; that stretch reads GKSWVSPAERYAVVPDETGLTDGSSKG. Residues 413–440 are disordered; it reads ETGLTDGSSKGNGGDISVPQTDVKRVRI.

In terms of assembly, homodimer in the absence of UV-B, but absorption of UV-B induces monomerization of UVR8 and interaction with COP1. Interacts with RUP1, RUP2 and histone H2B.

Its subcellular location is the nucleus. The protein localises to the cytoplasm. The protein resides in the cytosol. UV-B specific signaling component that acts as a UV-B photoreceptor and plays a key role in establishing UV-protective responses in plants. Upon UV-B irradiation, UVR8 undergoes an immediate switch from homodimer to monomer, accumulates in the nucleus, interacts with the photomorphogenic repressor COP1 and regulates the expression of the transcription factor HY5 by associating with chromatin (through histone H2B binding) in the HY5 promoter region. UVR8 is involved in controlling aspects of leaf growth and morphogenesis in response to UV-B, is required for normal progression of endocycle and has a regulatory role in stomatal differentiation. Is required for plant circadian clock response to photomorphogenic UV-B light, partly through the transcriptional activation of responsive clock genes. Promotes photosynthetic efficiency at elevated levels of UV-B. Plays a role in mediating the effects of UV-B radiation on pathogen resistance by controlling the expression of the sinapate biosynthetic pathway. The two tryptophans, Trp-285 and Trp-233, serve collectively as the UV-B chromophore. This chain is Ultraviolet-B receptor UVR8, found in Arabidopsis thaliana (Mouse-ear cress).